A 1146-amino-acid polypeptide reads, in one-letter code: Integrin alpha-PS1 (1146 aa).

A signal peptide spans 1–30; sequence MLELPFTTIRPNCRLRQNLGILIILQCVLT. At 31-1085 the chain is on the extracellular side; it reads CYNFNLEQRL…NQQRDTSIPW (1055 aa). 7 FG-GAP repeats span residues 38–105, 121–186, 193–245, 254–303, 304–366, 367–422, and 432–494; these read QRLP…FDDC, LSPP…FEEV, RPVQ…YLQR, HSDL…KSTD, NPIP…TLPM, KYTL…GLNS, and ELGG…RKEL. 3 N-linked (GlcNAc...) asparagine glycosylation sites follow: N68, N86, and N147. Residues N470, N511, N657, N680, N711, N718, N761, and N928 are each glycosylated (N-linked (GlcNAc...) asparagine). The segment at 938-958 is disordered; it reads YYSSSHRDDHSDDTQSNRNRV. The span at 942 to 952 shows a compositional bias: basic and acidic residues; it reads SHRDDHSDDTQ. An N-linked (GlcNAc...) asparagine glycan is attached at N1027. The chain crosses the membrane as a helical span at residues 1086–1106; sequence LIIILGIVGGLLLLALVTYVL. Residues 1107–1146 are Cytoplasmic-facing; that stretch reads WKVGFFKRIRPTDPTLSGNLEKMNEEKPFLAPSKNTHHVF.

Belongs to the integrin alpha chain family. In terms of assembly, heterodimer of an alpha and a beta subunit. The alpha subunit is composed of a heavy and a light chain linked by a disulfide bond. Alpha-PS1 associates with beta-PS. In terms of tissue distribution, expressed in follicle cells (at protein level). At syncytial blastoderm stage, expressed in the ectoderm but not in the mesodermal precursors. At embryonic stage 7, expressed in dorsal and ventrolateral ectoderm and in some yolk nuclei. At late stage 10, expression is homogeneous in the ectoderm and is particularly abundant in the anterior and posterior midgut primordia. At stage 11, strongly expressed in a metameric pattern in the ectoderm, in the proctodeum and in the posterior midgut primordium. At stage 12, accumulates at the segment boundaries that start to become morphologically visible, similar expression pattern is observed in the central nervous system. In third larval instar wing imaginal disk, strongly expressed in the dorsal compartment, in the adepithelial cells and in patches on the peripodial membrane covering the imaginal disk to the outside.

It is found in the apical cell membrane. It localises to the lateral cell membrane. The protein resides in the basal cell membrane. Integrin alpha-PS1/beta-PS is a receptor for laminin. This is Integrin alpha-PS1 (mew) from Drosophila melanogaster (Fruit fly).